We begin with the raw amino-acid sequence, 281 residues long: Large ribosomal subunit protein mL46 (281 aa).

Residues 1-19 constitute a mitochondrion transit peptide; sequence MKVNLMLKRGLATATATAS. Residues 106-118 show a composition bias toward basic and acidic residues; sequence RERSTKQEVKLSD. A disordered region spans residues 106–141; sequence RERSTKQEVKLSDDSTVAFSNNQKEQSKDDVNRPVI. Polar residues predominate over residues 119–129; that stretch reads DSTVAFSNNQK.

Belongs to the mitochondrion-specific ribosomal protein mL46 family. In terms of assembly, component of the mitochondrial large ribosomal subunit (mt-LSU). Mature yeast 74S mitochondrial ribosomes consist of a small (37S) and a large (54S) subunit. The 37S small subunit contains a 15S ribosomal RNA (15S mt-rRNA) and 34 different proteins. The 54S large subunit contains a 21S rRNA (21S mt-rRNA) and 46 different proteins.

The protein resides in the mitochondrion. Its function is as follows. Component of the mitochondrial ribosome (mitoribosome), a dedicated translation machinery responsible for the synthesis of mitochondrial genome-encoded proteins, including at least some of the essential transmembrane subunits of the mitochondrial respiratory chain. The mitoribosomes are attached to the mitochondrial inner membrane and translation products are cotranslationally integrated into the membrane. The protein is Large ribosomal subunit protein mL46 (MRPL17) of Saccharomyces cerevisiae (strain ATCC 204508 / S288c) (Baker's yeast).